We begin with the raw amino-acid sequence, 226 residues long: MSAVAYELLSTTAVISTVFQFLSGAMICRKYIQKKSTGDSSGVPFICGFLSCSFWLRYGVLTEEQSIVLVNIIGSTLFLIYTLIYYVFTVNKRAFVRQFAFVLAVLIAVVVVYTNRLADQRDEMIRITGIFCCIVTVCFFAAPLATLLHVIRAKNSESLPLPLIATSFLVSLQWLIYGILISDSFIQIPNFLGCLLSMLQLSLFVVYPPRSYSGQGYKLVEQAVPF.

Helical transmembrane passes span 8–28 (LLSTTAVISTVFQFLSGAMIC), 42–62 (GVPFICGFLSCSFWLRYGVLT), 67–87 (IVLVNIIGSTLFLIYTLIYYV), 94–114 (AFVRQFAFVLAVLIAVVVVYT), 127–147 (ITGIFCCIVTVCFFAAPLATL), 161–181 (LPLIATSFLVSLQWLIYGILI), and 185–205 (FIQIPNFLGCLLSMLQLSLFV). The MtN3/slv 1 domain maps to 8 to 92 (LLSTTAVIST…LIYYVFTVNK (85 aa)). A MtN3/slv 2 domain is found at 129 to 210 (GIFCCIVTVC…LSLFVVYPPR (82 aa)).

The protein belongs to the SWEET sugar transporter family.

The protein localises to the golgi apparatus membrane. It localises to the cell membrane. Functionally, mediates both low-affinity uptake and efflux of sugar across the membrane. This Drosophila pseudoobscura pseudoobscura (Fruit fly) protein is Sugar transporter SWEET1 (slv).